Consider the following 205-residue polypeptide: Dephospho-CoA kinase (205 aa).

Residues 15–205 (VIGLTGGIAT…VERALDQASI (191 aa)) form the DPCK domain. An ATP-binding site is contributed by 23-28 (ATGKST).

It belongs to the CoaE family.

The protein resides in the cytoplasm. It carries out the reaction 3'-dephospho-CoA + ATP = ADP + CoA + H(+). It participates in cofactor biosynthesis; coenzyme A biosynthesis; CoA from (R)-pantothenate: step 5/5. In terms of biological role, catalyzes the phosphorylation of the 3'-hydroxyl group of dephosphocoenzyme A to form coenzyme A. The polypeptide is Dephospho-CoA kinase (Gloeobacter violaceus (strain ATCC 29082 / PCC 7421)).